The sequence spans 81 residues: Omega-conotoxin-like TxO4 (81 aa).

The N-terminal stretch at 1–22 (MKLTCVVIVAVLFLTAWTFVTA) is a signal peptide. Positions 23–52 (VPHSSNALENLYLKARHEMENPEASKLNTR) are excised as a propeptide. Intrachain disulfides connect cysteine 55–cysteine 72, cysteine 62–cysteine 76, and cysteine 71–cysteine 80. Proline 70 bears the 4-hydroxyproline; partial mark. Tryptophan 75 carries the 6'-bromotryptophan; partial modification.

This sequence belongs to the conotoxin O1 superfamily. Post-translationally, txO4 is found with and without hydroxyproline and these two forms have a bromotryptophan. Truncated TxO4 is found with and without bromotryptophan, and these two forms have no hydroxyproline. In terms of tissue distribution, expressed by the venom duct.

It localises to the secreted. Omega-conotoxins act at presynaptic membranes, they bind and block voltage-gated calcium channels (Cav). This Conus textile (Cloth-of-gold cone) protein is Omega-conotoxin-like TxO4.